The following is a 650-amino-acid chain: Sterol O-acyltransferase 2 (650 aa).

Residues 41-79 are disordered; the sequence is LTSSNNSCASEHEGEGEGEDERPATTSSAPTQNHSAGDV. Positions 64 to 75 are enriched in polar residues; that stretch reads ATTSSAPTQNHS. 5 consecutive transmembrane segments (helical) span residues 223 to 243, 300 to 320, 412 to 432, 450 to 470, and 493 to 513; these read FSGL…KALI, TGWA…MYLT, INVS…QIEY, IFGT…PVAM, and LLVD…YLIW. An FYXDWWN motif motif is present at residues 531 to 537; it reads FYGDWWN. The next 2 helical transmembrane spans lie at 575-595 and 630-650; these read ATLM…YVIF and VIFW…YLTF. H587 is an active-site residue.

The protein belongs to the membrane-bound acyltransferase family. Sterol o-acyltransferase subfamily.

It is found in the endoplasmic reticulum membrane. In terms of biological role, sterol O-acyltransferase that catalyzes the formation of stery esters. This Saccharomyces uvarum (strain ATCC 76518 / CBS 7001 / CLIB 283 / NBRC 10550 / MCYC 623 / NCYC 2669 / NRRL Y-11845) (Yeast) protein is Sterol O-acyltransferase 2 (ARE2).